The primary structure comprises 132 residues: ATP synthase epsilon chain (132 aa).

This sequence belongs to the ATPase epsilon chain family. As to quaternary structure, F-type ATPases have 2 components, CF(1) - the catalytic core - and CF(0) - the membrane proton channel. CF(1) has five subunits: alpha(3), beta(3), gamma(1), delta(1), epsilon(1). CF(0) has three main subunits: a, b and c.

It localises to the cell inner membrane. In terms of biological role, produces ATP from ADP in the presence of a proton gradient across the membrane. The chain is ATP synthase epsilon chain from Anaeromyxobacter dehalogenans (strain 2CP-1 / ATCC BAA-258).